The primary structure comprises 173 residues: Cytochrome b6-f complex subunit 4, chloroplastic (173 aa).

Residues 1-14 constitute a chloroplast transit peptide; the sequence is ESALERRSSSVVMN. 3 consecutive transmembrane segments (helical) span residues 49–69, 108–128, and 144–164; these read LLYM…GLAV, LLGV…PFIE, and SVFL…TLPI.

It belongs to the cytochrome b family. PetD subfamily. In terms of assembly, the 4 large subunits of the cytochrome b6-f complex are cytochrome b6, subunit IV (17 kDa polypeptide, petD), cytochrome f and the Rieske protein, while the 4 small subunits are petG, petL, petM and petN. The complex functions as a dimer.

The protein localises to the plastid. The protein resides in the chloroplast thylakoid membrane. Functionally, component of the cytochrome b6-f complex, which mediates electron transfer between photosystem II (PSII) and photosystem I (PSI), cyclic electron flow around PSI, and state transitions. The chain is Cytochrome b6-f complex subunit 4, chloroplastic from Euglena gracilis.